Here is a 103-residue protein sequence, read N- to C-terminus: UPF0145 protein PBPRB0184 (103 aa).

Belongs to the UPF0145 family.

In Photobacterium profundum (strain SS9), this protein is UPF0145 protein PBPRB0184.